The sequence spans 1528 residues: Zinc finger FYVE domain-containing protein 16 (1528 aa).

At S120 the chain carries Phosphoserine. The interval 629–664 is disordered; it reads TQAVGGARPKQLLSLPPGTRSSKELNKPDVVDVPES. A compositionally biased stretch (basic and acidic residues) spans 649–658; that stretch reads SSKELNKPDV. The FYVE-type zinc-finger motif lies at 735–793; sequence DSEAPNCMNCQVKFTFTKRRHHCRACGKVFCGVCCNRKCKLQYLEKEARVCVICYETIN. Zn(2+) contacts are provided by C741, C744, C757, C760, C765, C768, C785, and C788. S803, S833, S884, and S927 each carry phosphoserine. Residues 819 to 849 are disordered; it reads TDQPLQETQTSSTPSPTTLPISALKQPNVEG. The segment covering 821–838 has biased composition (low complexity); the sequence is QPLQETQTSSTPSPTTLP. The tract at residues 928–949 is disordered; sequence PTCHTAPVERLPGNTGTEGLPM.

As to quaternary structure, interacts (via C-terminus) with TOM1 (via C-terminus); interaction is required to target TOM1 to endosomes. Does not interact with TOM1L1 or TOM1L2.

The protein resides in the cytoplasm. Its subcellular location is the early endosome membrane. Functionally, may be involved in regulating membrane trafficking in the endosomal pathway. Overexpression induces endosome aggregation. Required to target TOM1 to endosomes. The polypeptide is Zinc finger FYVE domain-containing protein 16 (Zfyve16) (Mus musculus (Mouse)).